The sequence spans 355 residues: Peptide chain release factor 1 (355 aa).

Q233 carries the post-translational modification N5-methylglutamine.

This sequence belongs to the prokaryotic/mitochondrial release factor family. In terms of processing, methylated by PrmC. Methylation increases the termination efficiency of RF1.

The protein localises to the cytoplasm. In terms of biological role, peptide chain release factor 1 directs the termination of translation in response to the peptide chain termination codons UAG and UAA. This is Peptide chain release factor 1 from Caldicellulosiruptor bescii (strain ATCC BAA-1888 / DSM 6725 / KCTC 15123 / Z-1320) (Anaerocellum thermophilum).